We begin with the raw amino-acid sequence, 33 residues long: Photosystem II reaction center protein Psb30 (33 aa).

Residues 5–25 (LIVQLTSLILISIAGPIIIAL) form a helical membrane-spanning segment.

This sequence belongs to the Psb30/Ycf12 family. PSII is composed of 1 copy each of membrane proteins PsbA, PsbB, PsbC, PsbD, PsbE, PsbF, PsbH, PsbI, PsbJ, PsbK, PsbL, PsbM, PsbT, PsbY, PsbZ, Psb30/Ycf12, peripheral proteins of the oxygen-evolving complex and a large number of cofactors. It forms dimeric complexes.

Its subcellular location is the plastid. It is found in the chloroplast thylakoid membrane. Its function is as follows. A core subunit of photosystem II (PSII), probably helps stabilize the reaction center. The protein is Photosystem II reaction center protein Psb30 of Euglena myxocylindracea.